The chain runs to 578 residues: Threonylcarbamoyladenosine tRNA methylthiotransferase (578 aa).

In terms of domain architecture, MTTase N-terminal spans 63-171 (QKIWIRTWGC…VVEVVEETIK (109 aa)). Residues cysteine 72 and cysteine 108 each coordinate [4Fe-4S] cluster. Serine 121 is subject to Phosphoserine. Residues cysteine 137, cysteine 213, cysteine 217, and cysteine 220 each coordinate [4Fe-4S] cluster. The Radical SAM core domain occupies 199–430 (RKNPLIEIIS…RVFHSYNPYD (232 aa)). The 63-residue stretch at 430-492 (DHKIGERQQV…KHFLKGQPVS (63 aa)) folds into the TRAM domain. Residue threonine 498 is modified to Phosphothreonine. The helical transmembrane segment at 553–570 (CALKVATGLALLALLLHF) threads the bilayer.

Belongs to the methylthiotransferase family. CDKAL1 subfamily. The cofactor is [4Fe-4S] cluster. Expressed in pancreas, liver and skeletal muscle, especially in white muscle fibers.

It localises to the endoplasmic reticulum membrane. The enzyme catalyses N(6)-L-threonylcarbamoyladenosine(37) in tRNA + (sulfur carrier)-SH + AH2 + 2 S-adenosyl-L-methionine = 2-methylsulfanyl-N(6)-L-threonylcarbamoyladenosine(37) in tRNA + (sulfur carrier)-H + 5'-deoxyadenosine + L-methionine + A + S-adenosyl-L-homocysteine + 2 H(+). Functionally, catalyzes the methylthiolation of N6-threonylcarbamoyladenosine (t(6)A), leading to the formation of 2-methylthio-N6-threonylcarbamoyladenosine (ms(2)t(6)A) at position 37 in tRNAs that read codons beginning with adenine. The polypeptide is Threonylcarbamoyladenosine tRNA methylthiotransferase (Cdkal1) (Mus musculus (Mouse)).